The following is a 190-amino-acid chain: Large ribosomal subunit protein bL17 (190 aa).

Over residues 135 to 165 (AKAAPAAEEAPAEEAPAAEEAATEEAPAAEE) the composition is skewed to low complexity. Positions 135 to 190 (AKAAPAAEEAPAEEAPAAEEAATEEAPAAEETATEEAAAEEAPAAEEAPAEEKDAK) are disordered.

This sequence belongs to the bacterial ribosomal protein bL17 family. Part of the 50S ribosomal subunit. Contacts protein L32.

This Pseudarthrobacter chlorophenolicus (strain ATCC 700700 / DSM 12829 / CIP 107037 / JCM 12360 / KCTC 9906 / NCIMB 13794 / A6) (Arthrobacter chlorophenolicus) protein is Large ribosomal subunit protein bL17.